The primary structure comprises 158 residues: Nascent polypeptide-associated complex subunit beta (158 aa).

Disordered stretches follow at residues 1 to 40 (MDQA…DKKL) and 119 to 158 (ESYQ…SKVE). The span at 16 to 31 (GKGKGTPRRKTKKVHK) shows a compositional bias: basic residues. The NAC-A/B domain maps to 34–99 (GTDDKKLQTS…GEDKELTELV (66 aa)). Over residues 137–152 (DDDDDDEIPDLVEGEN) the composition is skewed to acidic residues.

The protein belongs to the NAC-beta family. As to quaternary structure, part of the nascent polypeptide-associated complex (NAC), consisting of EGD2 and EGD1. NAC associates with ribosomes via EGD1.

It localises to the cytoplasm. Its subcellular location is the nucleus. In terms of biological role, component of the nascent polypeptide-associated complex (NAC), a dynamic component of the ribosomal exit tunnel, protecting the emerging polypeptides from interaction with other cytoplasmic proteins to ensure appropriate nascent protein targeting. The NAC complex also promotes mitochondrial protein import by enhancing productive ribosome interactions with the outer mitochondrial membrane and blocks the inappropriate interaction of ribosomes translating non-secretory nascent polypeptides with translocation sites in the membrane of the endoplasmic reticulum. EGD1 may act as a transcription factor that exert a negative effect on the expression of several genes that are transcribed by RNA polymerase II. In Ajellomyces capsulatus (strain NAm1 / WU24) (Darling's disease fungus), this protein is Nascent polypeptide-associated complex subunit beta (EGD1).